A 132-amino-acid polypeptide reads, in one-letter code: Probable histone H2A.2 (132 aa).

It belongs to the histone H2A family. As to quaternary structure, the nucleosome is a histone octamer containing two molecules each of H2A, H2B, H3 and H4 assembled in one H3-H4 heterotetramer and two H2A-H2B heterodimers. The octamer wraps approximately 147 bp of DNA. In terms of processing, not ubiquitinated. Expressed mainly in non-dividing tissues of the plant. Also found in meristems and dividing cells.

It localises to the nucleus. Its subcellular location is the chromosome. Core component of nucleosome. Nucleosomes wrap and compact DNA into chromatin, limiting DNA accessibility to the cellular machineries which require DNA as a template. Histones thereby play a central role in transcription regulation, DNA repair, DNA replication and chromosomal stability. DNA accessibility is regulated via a complex set of post-translational modifications of histones, also called histone code, and nucleosome remodeling. The protein is Probable histone H2A.2 of Arabidopsis thaliana (Mouse-ear cress).